Reading from the N-terminus, the 701-residue chain is Pre-mRNA-splicing factor CLF1 (701 aa).

12 HAT repeats span residues 43–75 (SYQQTKRKEFEQHINKNRLNLGQWTRYAKWEIE), 78–110 (HDFPRARSILERALDVNIQHVPFWIQYIQLELS), 112–144 (KNINHARNLMERAINTLPRVNKLWFLYVQTEEM), 146–177 (KNYPMVRAVFERWLDWHPDTSAWDAYINFEAR), 179–210 (EEKENVRTIFKKYVHEFPNAGTWYKWIKYEME), 214–253 (DDVNTVRAVFESAVDTLLSNKSEENDDDEEFATIISSWTS), 266–299 (EIFKLLLDNKTNKLEISDQTKSSIYTAFVEFEKN), 309–341 (SVLIKRRIKYEQEIQNDPYDYDSWWKYMTLLQN), 343–378 (SNKSDLENAFKKVTGNVVHDKHKSIKWRRYIMFWIW), 388–424 (NNPVSAREIWNNCLKVIPHKSFTFAKVWIGYSEFELR), 545–576 (MQYDKIREIYRALLDKDPNAHNWISFALFESS), and 601–642 (SQIE…VNGS).

Belongs to the crooked-neck family. In terms of assembly, associated with the spliceosome.

Its subcellular location is the nucleus. Its function is as follows. Involved in pre-mRNA splicing and cell cycle progression. Required for the spliceosome assembly and initiation of the DNA replication. In Candida albicans (strain SC5314 / ATCC MYA-2876) (Yeast), this protein is Pre-mRNA-splicing factor CLF1 (CLF1).